A 400-amino-acid polypeptide reads, in one-letter code: Bifunctional enzyme IspD/IspF (400 aa).

Residues 1 to 235 form a 2-C-methyl-D-erythritol 4-phosphate cytidylyltransferase region; it reads MSLWTVLLAA…LAEAAAPPVP (235 aa). The interval 236–400 is 2-C-methyl-D-erythritol 2,4-cyclodiphosphate synthase; it reads VTGYGYDVHR…VALVSGWRRP (165 aa). The a divalent metal cation site is built by aspartate 242 and histidine 244. 4-CDP-2-C-methyl-D-erythritol 2-phosphate contacts are provided by residues 242 to 244 and 276 to 277; these read DVH and HS. Position 284 (histidine 284) interacts with a divalent metal cation. 4-CDP-2-C-methyl-D-erythritol 2-phosphate-binding positions include 298–300, 303–307, 374–377, and phenylalanine 381; these read DIG, FPDSN, and TTEE.

The protein in the N-terminal section; belongs to the IspD/TarI cytidylyltransferase family. IspD subfamily. In the C-terminal section; belongs to the IspF family. It depends on a divalent metal cation as a cofactor.

The enzyme catalyses 2-C-methyl-D-erythritol 4-phosphate + CTP + H(+) = 4-CDP-2-C-methyl-D-erythritol + diphosphate. It catalyses the reaction 4-CDP-2-C-methyl-D-erythritol 2-phosphate = 2-C-methyl-D-erythritol 2,4-cyclic diphosphate + CMP. It participates in isoprenoid biosynthesis; isopentenyl diphosphate biosynthesis via DXP pathway; isopentenyl diphosphate from 1-deoxy-D-xylulose 5-phosphate: step 2/6. It functions in the pathway isoprenoid biosynthesis; isopentenyl diphosphate biosynthesis via DXP pathway; isopentenyl diphosphate from 1-deoxy-D-xylulose 5-phosphate: step 4/6. Bifunctional enzyme that catalyzes the formation of 4-diphosphocytidyl-2-C-methyl-D-erythritol from CTP and 2-C-methyl-D-erythritol 4-phosphate (MEP) (IspD), and catalyzes the conversion of 4-diphosphocytidyl-2-C-methyl-D-erythritol 2-phosphate (CDP-ME2P) to 2-C-methyl-D-erythritol 2,4-cyclodiphosphate (ME-CPP) with a corresponding release of cytidine 5-monophosphate (CMP) (IspF). The polypeptide is Bifunctional enzyme IspD/IspF (Solidesulfovibrio magneticus (strain ATCC 700980 / DSM 13731 / RS-1) (Desulfovibrio magneticus)).